Here is a 105-residue protein sequence, read N- to C-terminus: Large ribosomal subunit protein uL24 (105 aa).

It belongs to the universal ribosomal protein uL24 family. Part of the 50S ribosomal subunit.

Its function is as follows. One of two assembly initiator proteins, it binds directly to the 5'-end of the 23S rRNA, where it nucleates assembly of the 50S subunit. Functionally, one of the proteins that surrounds the polypeptide exit tunnel on the outside of the subunit. In Thioalkalivibrio sulfidiphilus (strain HL-EbGR7), this protein is Large ribosomal subunit protein uL24.